The sequence spans 93 residues: uncharacterized protein (93 aa).

Positions 24 to 85 (QLQVGDTLKL…IQTQVGRLFF (62 aa)) constitute a TRAM domain.

The protein belongs to the ycf81 family.

This is an uncharacterized protein from Thermus thermophilus.